Here is a 105-residue protein sequence, read N- to C-terminus: DNA-directed RNA polymerase subunit Rpo13 (105 aa).

Composition is skewed to basic and acidic residues over residues 1 to 10 (MSEDDSKKEP) and 70 to 80 (FDDVARSYSKA). Disordered stretches follow at residues 1-35 (MSED…GGEF) and 70-105 (FDDV…EEEE). Over residues 81 to 97 (DKKKRRVEKKPKKGKVT) the composition is skewed to basic residues.

The protein belongs to the archaeal Rpo13 RNA polymerase subunit family. In terms of assembly, part of the 13-subunit RNA polymerase.

It localises to the cytoplasm. The enzyme catalyses RNA(n) + a ribonucleoside 5'-triphosphate = RNA(n+1) + diphosphate. DNA-dependent RNA polymerase catalyzes the transcription of DNA into RNA using the four ribonucleoside triphosphates as substrates. In vitro binds dsDNA but not ssDNA. This is DNA-directed RNA polymerase subunit Rpo13 from Sulfolobus acidocaldarius (strain ATCC 33909 / DSM 639 / JCM 8929 / NBRC 15157 / NCIMB 11770).